Reading from the N-terminus, the 362-residue chain is S-adenosylmethionine-dependent nucleotide dehydratase RSAD2 (362 aa).

The disordered stretch occupies residues 47 to 73 (EQPQVRGEPEDTQETQEDGNSTQPTTP). Polar residues predominate over residues 64 to 73 (DGNSTQPTTP). Positions 70–290 (PTTPVSVNYH…LERHKEVSCL (221 aa)) constitute a Radical SAM core domain. [4Fe-4S] cluster is bound by residues cysteine 84, cysteine 88, and cysteine 91. At lysine 198 the chain carries N6-acetyllysine. A Glycyl lysine isopeptide (Lys-Gly) (interchain with G-Cter in ubiquitin) cross-link involves residue lysine 207.

This sequence belongs to the radical SAM superfamily. RSAD2 family. Homodimer. Interacts with IRAK1 and TRAF6. Interacts with FPPS. Interacts with HADHB. Interacts (via C-terminus) with VAPA/VAP33 (via C-terminus). The cofactor is [4Fe-4S] cluster. In terms of processing, acetylated by HAT1. HAT1-mediated acetylation of Lys-198 in turn recruits UBE4A that stimulates RSAD2 polyubiquitination leading to proteasomal degradation. 'Lys-6'-linked polyubiquitination at Lys-207 leads to RSAD2 protein degradation. As to expression, expressed at higher levels in atherosclerotic arteries than in normal arteries.

The protein localises to the endoplasmic reticulum membrane. Its subcellular location is the golgi apparatus. The protein resides in the endoplasmic reticulum. It is found in the lipid droplet. It localises to the mitochondrion. The protein localises to the mitochondrion inner membrane. Its subcellular location is the mitochondrion outer membrane. The catalysed reaction is CTP + AH2 + S-adenosyl-L-methionine = 3'-deoxy-3',4'-didehydro-CTP + 5'-deoxyadenosine + L-methionine + A + H2O + H(+). Its activity is regulated as follows. IRAK1 and TRAF6 synergistically activate RSAD2 increasing its activity with CTP as substrate about 10-fold. Its function is as follows. Interferon-inducible antiviral protein which plays a major role in the cell antiviral state induced by type I and type II interferon. Catalyzes the conversion of cytidine triphosphate (CTP) to 3'-deoxy-3',4'-didehydro-CTP (ddhCTP) via a SAM-dependent radical mechanism. In turn, ddhCTP acts as a chain terminator for the RNA-dependent RNA polymerases from multiple viruses and directly inhibits viral replication. Therefore, inhibits a wide range of DNA and RNA viruses. Also promotes TLR7 and TLR9-dependent production of IFN-beta production in plasmacytoid dendritic cells (pDCs) by facilitating 'Lys-63'-linked ubiquitination of IRAK1 by TRAF6. Plays a role in CD4+ T-cells activation and differentiation. Facilitates T-cell receptor (TCR)-mediated GATA3 activation and optimal T-helper 2 (Th2) cytokine production by modulating NFKB1 and JUNB activities. Can inhibit secretion of soluble proteins. The protein is S-adenosylmethionine-dependent nucleotide dehydratase RSAD2 of Mus musculus (Mouse).